The chain runs to 406 residues: Zinc finger CCCH domain-containing protein 15 homolog (406 aa).

The segment covering 1–11 (MPPKKAPAGPS) has biased composition (low complexity). The tract at residues 1 to 70 (MPPKKAPAGP…DKKKDEKEKK (70 aa)) is disordered. Basic and acidic residues predominate over residues 12 to 28 (KKTEQKKKEKVIEDKTF). A compositionally biased stretch (low complexity) spans 38–50 (QQKFIQQVQKQVQ). Residues 56-70 (PRQDGDKKKDEKEKK) are compositionally biased toward basic and acidic residues. A coiled-coil region spans residues 57 to 82 (RQDGDKKKDEKEKKLADLREMASIFK). 2 C3H1-type zinc fingers span residues 94-121 (DPKS…HDLS) and 166-203 (PTTE…HALP). A disordered region spans residues 336-382 (VDGSGTIASSTRLLDQATEAAKTAAAEDGAASDDENPSSSAPANDAA). 2 stretches are compositionally biased toward low complexity: residues 352–364 (ATEA…AEDG) and 372–382 (PSSSAPANDAA).

This sequence belongs to the ZC3H15/TMA46 family.

The sequence is that of Zinc finger CCCH domain-containing protein 15 homolog from Drosophila pseudoobscura pseudoobscura (Fruit fly).